Here is a 993-residue protein sequence, read N- to C-terminus: uncharacterized protein (993 aa).

The signal sequence occupies residues 1–24 (MLLFKFNFTTAFLFTILAFAQARS). N-linked (GlcNAc...) asparagine glycosylation is found at Asn7, Asn44, Asn89, Asn121, Asn138, Asn161, Asn169, Asn232, Asn361, Asn386, Asn393, Asn423, Asn447, Asn480, and Asn488. Glu504 is an active-site residue. Asn545, Asn548, and Asn614 each carry an N-linked (GlcNAc...) asparagine glycan. The active-site Proton donor is Asp672. N-linked (GlcNAc...) asparagine glycans are attached at residues Asn673, Asn814, Asn826, Asn835, Asn846, Asn910, Asn940, and Asn987.

The protein belongs to the glycosyl hydrolase 31 family.

This is an uncharacterized protein from Schizosaccharomyces pombe (strain 972 / ATCC 24843) (Fission yeast).